Consider the following 301-residue polypeptide: Putative F-box/LRR-repeat protein 19 (301 aa).

The 49-residue stretch at 18–66 (PDWSELTRECLLDIFSRLSQEQRWIGPMLVSKNWMNACYDPTLNTIFDL) folds into the F-box domain. 5 LRR repeats span residues 108–133 (IRHC…WIKN), 134–159 (CPNV…DISY), 160–185 (SYGI…KRNL), 231–256 (YSTL…DLRG), and 257–282 (CISL…IKPD).

This chain is Putative F-box/LRR-repeat protein 19 (FBL19), found in Arabidopsis thaliana (Mouse-ear cress).